A 160-amino-acid chain; its full sequence is ATP synthase subunit b (160 aa).

The helical transmembrane segment at 13-33 threads the bilayer; sequence VNLAIVIGVLVWFLRGFLGGI.

The protein belongs to the ATPase B chain family. As to quaternary structure, F-type ATPases have 2 components, F(1) - the catalytic core - and F(0) - the membrane proton channel. F(1) has five subunits: alpha(3), beta(3), gamma(1), delta(1), epsilon(1). F(0) has four main subunits: a(1), b(1), b'(1) and c(10-14). The alpha and beta chains form an alternating ring which encloses part of the gamma chain. F(1) is attached to F(0) by a central stalk formed by the gamma and epsilon chains, while a peripheral stalk is formed by the delta, b and b' chains.

Its subcellular location is the cellular thylakoid membrane. F(1)F(0) ATP synthase produces ATP from ADP in the presence of a proton or sodium gradient. F-type ATPases consist of two structural domains, F(1) containing the extramembraneous catalytic core and F(0) containing the membrane proton channel, linked together by a central stalk and a peripheral stalk. During catalysis, ATP synthesis in the catalytic domain of F(1) is coupled via a rotary mechanism of the central stalk subunits to proton translocation. Functionally, component of the F(0) channel, it forms part of the peripheral stalk, linking F(1) to F(0). The polypeptide is ATP synthase subunit b (Parasynechococcus marenigrum (strain WH8102)).